Reading from the N-terminus, the 492-residue chain is Aspartyl/glutamyl-tRNA(Asn/Gln) amidotransferase subunit B (492 aa).

The protein belongs to the GatB/GatE family. GatB subfamily. In terms of assembly, heterotrimer of A, B and C subunits.

The enzyme catalyses L-glutamyl-tRNA(Gln) + L-glutamine + ATP + H2O = L-glutaminyl-tRNA(Gln) + L-glutamate + ADP + phosphate + H(+). It catalyses the reaction L-aspartyl-tRNA(Asn) + L-glutamine + ATP + H2O = L-asparaginyl-tRNA(Asn) + L-glutamate + ADP + phosphate + 2 H(+). Functionally, allows the formation of correctly charged Asn-tRNA(Asn) or Gln-tRNA(Gln) through the transamidation of misacylated Asp-tRNA(Asn) or Glu-tRNA(Gln) in organisms which lack either or both of asparaginyl-tRNA or glutaminyl-tRNA synthetases. The reaction takes place in the presence of glutamine and ATP through an activated phospho-Asp-tRNA(Asn) or phospho-Glu-tRNA(Gln). This chain is Aspartyl/glutamyl-tRNA(Asn/Gln) amidotransferase subunit B, found in Prochlorococcus marinus (strain SARG / CCMP1375 / SS120).